The primary structure comprises 444 residues: tRNA (guanine-N(7)-)-methyltransferase non-catalytic subunit TRM82 (444 aa).

7 WD repeats span residues 1–47, 48–99, 100–147, 148–192, 193–237, 238–279, and 308–354; these read MSVI…WSDD, FDKI…LGAP, PIYS…KRFC, FSKR…EPIL, GHVS…DKWL, FGHK…STFD, and FAVS…ITFP. Residues 55–92 form a disordered region; the sequence is RNTTAKEQQGQSSENENENKKLKSNKGDSIKRTAAKVP. Positions 71–85 are enriched in basic and acidic residues; it reads NENKKLKSNKGDSIK. A Phosphoserine modification is found at S93.

It belongs to the WD repeat TRM82 family. Forms a heterodimer with the catalytic subunit TRM8.

It is found in the nucleus. The protein operates within tRNA modification; N(7)-methylguanine-tRNA biosynthesis. Functionally, required for the formation of N(7)-methylguanine at position 46 (m7G46) in tRNA, a modification required to maintain stability of tRNAs; its absence resulting in tRNA decay. In the complex, it is required to stabilize and induce conformational changes of the catalytic subunit. This is tRNA (guanine-N(7)-)-methyltransferase non-catalytic subunit TRM82 from Saccharomyces cerevisiae (strain ATCC 204508 / S288c) (Baker's yeast).